The primary structure comprises 176 residues: Large ribosomal subunit protein uL10 (176 aa).

Belongs to the universal ribosomal protein uL10 family. In terms of assembly, part of the ribosomal stalk of the 50S ribosomal subunit. The N-terminus interacts with L11 and the large rRNA to form the base of the stalk. The C-terminus forms an elongated spine to which L12 dimers bind in a sequential fashion forming a multimeric L10(L12)X complex.

Its function is as follows. Forms part of the ribosomal stalk, playing a central role in the interaction of the ribosome with GTP-bound translation factors. In Streptomyces coelicolor (strain ATCC BAA-471 / A3(2) / M145), this protein is Large ribosomal subunit protein uL10 (rplJ).